Consider the following 200-residue polypeptide: Translation machinery-associated protein 22 (200 aa).

Positions 106–177 (VQIKRVERNK…DVLEWLVEVH (72 aa)) constitute an SUI1 domain.

The protein belongs to the DENR family. As to quaternary structure, interacts with the 40S ribosomal subunit.

The protein resides in the cytoplasm. This chain is Translation machinery-associated protein 22 (TMA22), found in Coccidioides immitis (strain RS) (Valley fever fungus).